A 271-amino-acid polypeptide reads, in one-letter code: Malonyl-[acyl-carrier protein] O-methyltransferase (271 aa).

Belongs to the methyltransferase superfamily.

The catalysed reaction is malonyl-[ACP] + S-adenosyl-L-methionine = malonyl-[ACP] methyl ester + S-adenosyl-L-homocysteine. It participates in cofactor biosynthesis; biotin biosynthesis. Its function is as follows. Converts the free carboxyl group of a malonyl-thioester to its methyl ester by transfer of a methyl group from S-adenosyl-L-methionine (SAM). It allows to synthesize pimeloyl-ACP via the fatty acid synthetic pathway. The protein is Malonyl-[acyl-carrier protein] O-methyltransferase of Halalkalibacterium halodurans (strain ATCC BAA-125 / DSM 18197 / FERM 7344 / JCM 9153 / C-125) (Bacillus halodurans).